Reading from the N-terminus, the 349-residue chain is Alanine racemase (349 aa).

Lys35 functions as the Proton acceptor; specific for D-alanine in the catalytic mechanism. N6-(pyridoxal phosphate)lysine is present on Lys35. Arg130 serves as a coordination point for substrate. The active-site Proton acceptor; specific for L-alanine is Tyr244. Met292 provides a ligand contact to substrate.

Belongs to the alanine racemase family. Pyridoxal 5'-phosphate is required as a cofactor.

It catalyses the reaction L-alanine = D-alanine. The protein operates within amino-acid biosynthesis; D-alanine biosynthesis; D-alanine from L-alanine: step 1/1. In terms of biological role, catalyzes the interconversion of L-alanine and D-alanine. May also act on other amino acids. In Cereibacter sphaeroides (strain ATCC 17025 / ATH 2.4.3) (Rhodobacter sphaeroides), this protein is Alanine racemase (alr).